The chain runs to 142 residues: MNTQDQPVTASLVAEAQRLDFLPTYFGPRLMMRGEALVYAWLRRLCERYNGAYWHYYTLSDGGFYLAPDLAERLEIEVDGNGFRGELSADAAGIVATLFALGQLAAEIAGTDAADALIDRYHFLRGFAAGHPEAAAIYRAID.

This sequence belongs to the antirestriction protein family.

Its function is as follows. Could be involved in overcoming restriction barriers during establishment after conjugative transfer. The protein is Antirestriction protein KlcA (klcA) of Escherichia coli.